The sequence spans 250 residues: Kallikrein-14 (250 aa).

The signal sequence occupies residues 1-18; it reads MFLLLIILQALAVAIAQS. Positions 19-23 are cleaved as a propeptide — activation peptide; that stretch reads QGDHK. A Peptidase S1 domain is found at 24 to 248; the sequence is IIGGYRCVRN…YHSWIQRTMQ (225 aa). Cysteine 51 and cysteine 67 are oxidised to a cystine. Residues histidine 66 and aspartate 110 each act as charge relay system in the active site. 3 disulfides stabilise this stretch: cysteine 142–cysteine 209, cysteine 174–cysteine 188, and cysteine 199–cysteine 224. Serine 203 acts as the Charge relay system in catalysis.

The protein belongs to the peptidase S1 family. Kallikrein subfamily. Proteolytic cleavage of the activation peptide produces the active enzyme.

Its subcellular location is the secreted. It is found in the extracellular space. Inhibited by SERPINA1, SERPINC1, SERPINE1, SERPINF2, aprotinin, soybean, trypsin inhibitor and leupeptin. Inhibited by serine protease inhibitor SPINK5. Has an autoproteolytic activity which may have a regulatory effect. Activated by citrate and inhibited by zinc and to a lower extent by manganese. Its function is as follows. Serine-type endopeptidase with a dual trypsin-like and chymotrypsin-like substrate specificity. May activate/inactivate the proteinase-activated receptors F2R, F2RL1 and F2RL3 and other kallikreins including KLK1, KLK3, KLK5 and KLK11. May function in seminal clot liquefaction through direct cleavage of the semenogelin SEMG1 and SEMG2 and activation of KLK3. May function through desmoglein DSG1 cleavage in epidermal desquamation a process by which the most superficial corneocytes are shed from the skin surface. May be involved in several aspects of tumor progression including growth, invasion and angiogenesis. The protein is Kallikrein-14 (Klk14) of Mus musculus (Mouse).